We begin with the raw amino-acid sequence, 67 residues long: Potassium channel toxin alpha-KTx (67 aa).

The N-terminal stretch at 1 to 25 (MKNIAMKTTVVLTILLLSVLTAINA) is a signal peptide. The propeptide occupies 26-31 (DTMKKR). Disulfide bonds link Cys35–Cys54, Cys40–Cys59, Cys44–Cys61, and Cys49–Cys64.

It belongs to the short scorpion toxin superfamily. Potassium channel inhibitor family. In terms of tissue distribution, expressed by the venom gland.

It is found in the secreted. Blocks Kv1.1/KCNA1, Kv1.2/KCNA2 and Kv1.3/KCNA3 voltage-gated potassium channels. The polypeptide is Potassium channel toxin alpha-KTx (Hoffmannihadrurus gertschi (Scorpion)).